A 284-amino-acid polypeptide reads, in one-letter code: 4-hydroxybenzoate octaprenyltransferase (284 aa).

Helical transmembrane passes span 33–53 (VIAA…LGVF), 93–113 (IGLF…MNPL), 136–156 (YLPQ…AWAA), 159–179 (GELP…TIAY), 209–229 (LVIG…GQHY), 231–248 (LGQS…LFVY), and 264–284 (AFLN…IAFW).

Belongs to the UbiA prenyltransferase family. Requires Mg(2+) as cofactor.

It localises to the cell inner membrane. The enzyme catalyses all-trans-octaprenyl diphosphate + 4-hydroxybenzoate = 4-hydroxy-3-(all-trans-octaprenyl)benzoate + diphosphate. The protein operates within cofactor biosynthesis; ubiquinone biosynthesis. Functionally, catalyzes the prenylation of para-hydroxybenzoate (PHB) with an all-trans polyprenyl group. Mediates the second step in the final reaction sequence of ubiquinone-8 (UQ-8) biosynthesis, which is the condensation of the polyisoprenoid side chain with PHB, generating the first membrane-bound Q intermediate 3-octaprenyl-4-hydroxybenzoate. This is 4-hydroxybenzoate octaprenyltransferase from Vibrio campbellii (strain ATCC BAA-1116).